The sequence spans 354 residues: MNGTEGPYFNVPMVNTTGIVRSPYEYPQYYLVSPAAYAALGAYMFFLILVGFPINFLTLYVTLEHKKLRTPLNYILLNLAVADLFMVFGGFTTTMYTSMHGYFVLGRLGCNLEGFFATLGGEIGLWSLVVLAIERWVVVCKPISNFRFGENHAIMGLVFTWIMAASCAVPPLVGWSRYIPEGMQCSCGVDYYTRAEGFNNESFVVYMFVCHFLIPLIVVFFCYGRLLCAVKEAAAAQQESETTQRAEREVTRMVVIMVIGFLVCWLPYASVAWYIFTNQGSEFGPLFMTIPAFFAKSSSIYNPAIYICMNKQFRNCMITTLCCGKNPFEEEEGASTTASKTEASSVSSSSVSPA.

Topologically, residues 1 to 36 (MNGTEGPYFNVPMVNTTGIVRSPYEYPQYYLVSPAA) are extracellular. N-linked (GlcNAc...) asparagine glycosylation is found at N2 and N15. The helical transmembrane segment at 37-61 (YAALGAYMFFLILVGFPINFLTLYV) threads the bilayer. Over 62-73 (TLEHKKLRTPLN) the chain is Cytoplasmic. A helical membrane pass occupies residues 74–96 (YILLNLAVADLFMVFGGFTTTMY). Residues 97–110 (TSMHGYFVLGRLGC) are Extracellular-facing. A disulfide bridge connects residues C110 and C187. Residues 111 to 133 (NLEGFFATLGGEIGLWSLVVLAI) traverse the membrane as a helical segment. The short motif at 134-136 (ERW) is the 'Ionic lock' involved in activated form stabilization element. Topologically, residues 134-152 (ERWVVVCKPISNFRFGENH) are cytoplasmic. Residues 153-173 (AIMGLVFTWIMAASCAVPPLV) form a helical membrane-spanning segment. The Extracellular segment spans residues 174–202 (GWSRYIPEGMQCSCGVDYYTRAEGFNNES). Residues 203-224 (FVVYMFVCHFLIPLIVVFFCYG) traverse the membrane as a helical segment. Residues 225–252 (RLLCAVKEAAAAQQESETTQRAEREVTR) lie on the Cytoplasmic side of the membrane. Residues 253–274 (MVVIMVIGFLVCWLPYASVAWY) traverse the membrane as a helical segment. The Extracellular portion of the chain corresponds to 275–286 (IFTNQGSEFGPL). A helical transmembrane segment spans residues 287-308 (FMTIPAFFAKSSSIYNPAIYIC). Position 296 is an N6-(retinylidene)lysine (K296). Over 309-354 (MNKQFRNCMITTLCCGKNPFEEEEGASTTASKTEASSVSSSSVSPA) the chain is Cytoplasmic. 2 S-palmitoyl cysteine lipidation sites follow: C322 and C323. Positions 332–354 (EGASTTASKTEASSVSSSSVSPA) are disordered. Residues 334 to 354 (ASTTASKTEASSVSSSSVSPA) show a composition bias toward low complexity.

The protein belongs to the G-protein coupled receptor 1 family. Opsin subfamily. In terms of processing, phosphorylated on some or all of the serine and threonine residues present in the C-terminal region. Contains one covalently linked retinal chromophore.

It is found in the membrane. The protein resides in the cell projection. The protein localises to the cilium. Its subcellular location is the photoreceptor outer segment. Photoreceptor required for image-forming vision at low light intensity. While most salt water fish species use retinal as chromophore, most freshwater fish use 3-dehydroretinal, or a mixture of retinal and 3-dehydroretinal. Light-induced isomerization of 11-cis to all-trans retinal triggers a conformational change that activates signaling via G-proteins. Subsequent receptor phosphorylation mediates displacement of the bound G-protein alpha subunit by arrestin and terminates signaling. This Oryzias latipes (Japanese rice fish) protein is Rhodopsin (rho).